The primary structure comprises 301 residues: MGLDGLAAYLDAYLENIVREGKSEHTVAAYRRDLQELLALLEEMPSANPSNCTRGDFVQALRRLSGRGLGERTLARKLSSWRQYCVWLVKRGLMHADPTADIKPPKQPERVPKALPQEWLNRMLDLPVDGGDPLAVRDHALFELMYGSGLRVSEIHGLNADDVYLDEAWVHVIGKGRKQRQVPLVGKSVEALKNYLPLRQTASDGKALFTGRNGTRLSQRQIQKRLAQWAAQNGDGRHVSPHMMRHSYAGHLLQASRDIRAVQELLGHSSLSTTQIYTKLDFDHIARLYDEAHPRAKRQDE.

Residues 1-89 enclose the Core-binding (CB) domain; the sequence is MGLDGLAAYL…SWRQYCVWLV (89 aa). The Tyr recombinase domain maps to 110-290; that stretch reads RVPKALPQEW…DFDHIARLYD (181 aa). Catalysis depends on residues arginine 151, lysine 175, histidine 242, arginine 245, and histidine 268. Tyrosine 277 acts as the O-(3'-phospho-DNA)-tyrosine intermediate in catalysis.

This sequence belongs to the 'phage' integrase family. XerC subfamily. As to quaternary structure, forms a cyclic heterotetrameric complex composed of two molecules of XerC and two molecules of XerD.

Its subcellular location is the cytoplasm. In terms of biological role, site-specific tyrosine recombinase, which acts by catalyzing the cutting and rejoining of the recombining DNA molecules. The XerC-XerD complex is essential to convert dimers of the bacterial chromosome into monomers to permit their segregation at cell division. It also contributes to the segregational stability of plasmids. This is Tyrosine recombinase XerC from Neisseria meningitidis serogroup B (strain ATCC BAA-335 / MC58).